A 507-amino-acid chain; its full sequence is ATP synthase subunit alpha, chloroplastic (507 aa).

Residue 170–177 participates in ATP binding; the sequence is GDRQTGKT.

The protein belongs to the ATPase alpha/beta chains family. In terms of assembly, F-type ATPases have 2 components, CF(1) - the catalytic core - and CF(0) - the membrane proton channel. CF(1) has five subunits: alpha(3), beta(3), gamma(1), delta(1), epsilon(1). CF(0) has four main subunits: a, b, b' and c.

It localises to the plastid. The protein localises to the chloroplast thylakoid membrane. The enzyme catalyses ATP + H2O + 4 H(+)(in) = ADP + phosphate + 5 H(+)(out). Its function is as follows. Produces ATP from ADP in the presence of a proton gradient across the membrane. The alpha chain is a regulatory subunit. The sequence is that of ATP synthase subunit alpha, chloroplastic from Daucus carota (Wild carrot).